Here is a 207-residue protein sequence, read N- to C-terminus: Macrophage immunometabolism regulator (207 aa).

N-acetylmethionine is present on Met-1. The disordered stretch occupies residues 1–41 (MEVDVNGESRSALTTLPLPVAEASSPGKAEAEKPRCSSTPC). A phosphoserine mark is found at Ser-25, Ser-140, and Ser-167.

Belongs to the UNC119-binding protein family. As to quaternary structure, interacts with UNC119 and UNC119B; interaction preferentially takes place when UNC119 and UNC119B are unliganded with myristoylated proteins.

The protein localises to the cytoplasm. The protein resides in the cell projection. It is found in the cilium. Regulates the macrophage function, by enhancing the resolution of inflammation and wound repair functions mediated by M2 macrophages. The regulation of macrophage function is, due at least in part, to its ability to inhibit glycolysis. May play also a role in trafficking of proteins via its interaction with UNC119 and UNC119B cargo adapters: may help the release of UNC119 and UNC119B cargo or the recycling of UNC119 and UNC119B. May play a role in ciliary membrane localization via its interaction with UNC119B and protein transport into photoreceptor cells. This Bos taurus (Bovine) protein is Macrophage immunometabolism regulator (MACIR).